Here is a 105-residue protein sequence, read N- to C-terminus: U-scoloptoxin(05)-Sa2a (105 aa).

The N-terminal stretch at 1–24 is a signal peptide; the sequence is MKEAVKMSCLCIFLFLFLFSLTDA. A disordered region spans residues 79–105; the sequence is HVPESNQKDGKVSTHMSSCNTDGCNAN. Polar residues predominate over residues 92–105; sequence THMSSCNTDGCNAN.

It belongs to the scoloptoxin-05 family. Contains 4 disulfide bonds. As to expression, expressed by the venom gland.

It is found in the secreted. In Scolopendra alternans (Florida Keys giant centipede), this protein is U-scoloptoxin(05)-Sa2a.